The chain runs to 272 residues: MKFSKMHGNGNDFIVIEDLNNEYLGKEGEIAQKMCHRRFGIGADGILIVRKNENCDIEMVIINSDGSYAAMCGNGIRCFAKYVYEKGIVKKDVLDVLTGDGVKRIFLEIENDKVKTINVNMGFGDFKPKNIPALCDEEIIEKKVSVGNGNFEITSLLMGVPHTIIFEEEKYPIECGRDIEKYELFPQGTNVNFCKVIDRNTMEVRTWERGAGPTLACGTGNCASVIAANKLGLVDKEVKVIVPGGELKVNIEDDGVKMIGNASFICDGTYLF.

2 residues coordinate substrate: asparagine 11 and asparagine 63. The active-site Proton donor is cysteine 72. Substrate contacts are provided by residues 73-74 (GN), asparagine 190, and 208-209 (ER). Cysteine 217 acts as the Proton acceptor in catalysis. 218-219 (GT) serves as a coordination point for substrate.

Belongs to the diaminopimelate epimerase family. Homodimer.

Its subcellular location is the cytoplasm. It catalyses the reaction (2S,6S)-2,6-diaminopimelate = meso-2,6-diaminopimelate. Its pathway is amino-acid biosynthesis; L-lysine biosynthesis via DAP pathway; DL-2,6-diaminopimelate from LL-2,6-diaminopimelate: step 1/1. Its function is as follows. Catalyzes the stereoinversion of LL-2,6-diaminopimelate (L,L-DAP) to meso-diaminopimelate (meso-DAP), a precursor of L-lysine and an essential component of the bacterial peptidoglycan. This Clostridium perfringens (strain 13 / Type A) protein is Diaminopimelate epimerase.